Consider the following 130-residue polypeptide: MKKMLVEFRDFALKGNVLDLAVAVVIGAAFGKIVSSLVDNIIMPVVGVLLGGLDFTKLSVTVGKSVIQYGAFIQSIVDFIIIAFAIFIFVKILTSFMKKKEQPVEETPVPPTEEYLKEIRDLLKEQQKEI.

Transmembrane regions (helical) follow at residues 11–31 (FALK…AAFG) and 70–90 (GAFI…FIFV).

This sequence belongs to the MscL family. As to quaternary structure, homopentamer.

Its subcellular location is the cell membrane. In terms of biological role, channel that opens in response to stretch forces in the membrane lipid bilayer. May participate in the regulation of osmotic pressure changes within the cell. This Listeria welshimeri serovar 6b (strain ATCC 35897 / DSM 20650 / CCUG 15529 / CIP 8149 / NCTC 11857 / SLCC 5334 / V8) protein is Large-conductance mechanosensitive channel.